Here is a 355-residue protein sequence, read N- to C-terminus: tRNA uridine(34) hydroxylase (355 aa).

The Rhodanese domain occupies 146-240 (KDPDALFVDM…YVRTAKKKDL (95 aa)). C200 acts as the Cysteine persulfide intermediate in catalysis.

It belongs to the TrhO family.

It catalyses the reaction uridine(34) in tRNA + AH2 + O2 = 5-hydroxyuridine(34) in tRNA + A + H2O. Functionally, catalyzes oxygen-dependent 5-hydroxyuridine (ho5U) modification at position 34 in tRNAs. The protein is tRNA uridine(34) hydroxylase of Hamiltonella defensa subsp. Acyrthosiphon pisum (strain 5AT).